Here is a 1085-residue protein sequence, read N- to C-terminus: Protein CROWDED NUCLEI 3 (1085 aa).

Coiled coils occupy residues 51–149 and 185–695; these read DEAS…NDLK and RERA…LDVL. Lys-318 is covalently cross-linked (Glycyl lysine isopeptide (Lys-Gly) (interchain with G-Cter in ubiquitin)). Residues 404–411 carry the Nuclear localization signal motif; it reads AKREAALE. A Glycyl lysine isopeptide (Lys-Gly) (interchain with G-Cter in ubiquitin) cross-link involves residue Lys-661. Residues Ser-764, Ser-787, Ser-825, and Ser-843 each carry the phosphoserine modification. Disordered stretches follow at residues 801-997 and 1020-1077; these read TVKL…GKAE and NNTG…SIGK. A compositionally biased stretch (basic and acidic residues) spans 813-825; it reads SLDRVSGEDHEPS. The span at 854-868 shows a compositional bias: basic residues; that stretch reads RRGRGRGRGRGKSVR. A compositionally biased stretch (basic and acidic residues) spans 877–897; that stretch reads VSRDSKPSDGETPRKRQREQT. Ser-910 is modified (phosphoserine). Polar residues predominate over residues 932–941; the sequence is VSQTPGQTRY. The segment covering 949–995 has biased composition (basic and acidic residues); the sequence is VGTEEDKAQASKGATEKQERVNDDIRKVPSPKETRTPPEGENRENGK. Acidic residues predominate over residues 1045–1066; the sequence is EEDDENISMIEEENEGEEEEET.

It belongs to the CRWN family. Core component of the LINC complex which is composed of inner nuclear membrane SUN domain-containing proteins coupled to outer nuclear membrane WIP proteins, the nucleoskeletal CRWN/LINC proteins, and, possibly, KAKU4. In terms of tissue distribution, expressed at low levels in roots, leaves, flowers and flower stalks.

The protein resides in the nucleus membrane. Its subcellular location is the nucleus. The protein localises to the nucleoplasm. It localises to the cytoplasm. It is found in the nucleus lamina. Component of SUN-protein-containing multivariate complexes also called LINC complexes which link the nucleoskeleton and cytoskeleton by providing versatile outer nuclear membrane attachment sites for cytoskeletal filaments. Required for nucleus structure organization (e.g. size and shape). This Arabidopsis thaliana (Mouse-ear cress) protein is Protein CROWDED NUCLEI 3.